A 286-amino-acid chain; its full sequence is Pantothenate synthetase (286 aa).

Residue 30-37 (MGNLHAGH) participates in ATP binding. Histidine 37 functions as the Proton donor in the catalytic mechanism. Glutamine 61 is a (R)-pantoate binding site. Glutamine 61 is a binding site for beta-alanine. Residue 149–152 (GEKD) participates in ATP binding. Glutamine 155 lines the (R)-pantoate pocket. ATP contacts are provided by residues valine 178 and 186-189 (MSSR).

It belongs to the pantothenate synthetase family. Homodimer.

Its subcellular location is the cytoplasm. It catalyses the reaction (R)-pantoate + beta-alanine + ATP = (R)-pantothenate + AMP + diphosphate + H(+). It participates in cofactor biosynthesis; (R)-pantothenate biosynthesis; (R)-pantothenate from (R)-pantoate and beta-alanine: step 1/1. In terms of biological role, catalyzes the condensation of pantoate with beta-alanine in an ATP-dependent reaction via a pantoyl-adenylate intermediate. The protein is Pantothenate synthetase of Thioalkalivibrio sulfidiphilus (strain HL-EbGR7).